The following is a 303-amino-acid chain: Sporulation regulatory protein (303 aa).

The 188-residue stretch at 26–213 (TGRLRAGLRK…HRVNDKQTAE (188 aa)) folds into the FtsK domain. Residue 43-50 (GANHSGKS) participates in ATP binding.

Involved in sporulation inhibition and pock formation. In Streptomyces azureus, this protein is Sporulation regulatory protein (spi).